The primary structure comprises 293 residues: 5'-3' exoribonuclease Rnm (293 aa).

Mn(2+) is bound by residues His-17, His-19, Asp-24, His-49, Glu-76, His-87, His-202, Asp-259, and His-261.

This sequence belongs to the PHP family. TrpH/YciV subfamily. It depends on Mn(2+) as a cofactor.

It carries out the reaction a ribonucleoside 3',5'-bisphosphate + H2O = a ribonucleoside 5'-phosphate + phosphate. In terms of biological role, exoribonuclease that catalyzes the last steps of 5S, 16S and 23S rRNA 5'-end maturation. Removes 3 nucleotides (nt) from the 5' end of 5S, 16S and 23S rRNA precursors to generate the mature 5' ends. 5S and 23S rRNA maturation occurs more efficiently and accurately on ribosomal particles as compared to free RNA. Efficiently catalyzes the hydrolysis of the 3'-phosphate from 3',5'-bis-phosphonucleotides as well as the successive hydrolysis of 5'-phosphomononucleotides from the 5'-end of short pieces of RNA and DNA, with no specificity toward the identity of the nucleotide base. Is more efficient at hydrolyzing RNA oligonucleotides than DNA oligonucleotides. This enzyme can also hydrolyze annealed DNA duplexes, albeit at a catalytic efficiency lower than that of the corresponding single-stranded oligonucleotides. This chain is 5'-3' exoribonuclease Rnm, found in Salmonella typhimurium (strain LT2 / SGSC1412 / ATCC 700720).